We begin with the raw amino-acid sequence, 693 residues long: Translation factor GUF1 homolog, chloroplastic (693 aa).

A chloroplast-targeting transit peptide spans 1-51 (MATDLSSSSTLLLSRNCKTPPFYHTTNSLSLSKTHHLYASRNAVVSRLRLL). Residues 86-267 (SNIRNFCIIA…AIVERIPSPR (182 aa)) enclose the tr-type G domain. Residues 95-102 (AHIDHGKS), 160-164 (DTPGH), and 214-217 (NKID) contribute to the GTP site.

The protein belongs to the TRAFAC class translation factor GTPase superfamily. Classic translation factor GTPase family. LepA subfamily.

Its subcellular location is the plastid. It localises to the chloroplast. It catalyses the reaction GTP + H2O = GDP + phosphate + H(+). In terms of biological role, promotes chloroplast protein synthesis. May act as a fidelity factor of the translation reaction, by catalyzing a one-codon backward translocation of tRNAs on improperly translocated ribosomes. The chain is Translation factor GUF1 homolog, chloroplastic from Ricinus communis (Castor bean).